The sequence spans 326 residues: Protein ORF5 in retron Ec67 (326 aa).

A disordered region spans residues Met-1–Glu-24. The segment covering Ala-10 to Glu-24 has biased composition (polar residues).

It belongs to the phage portal family. PBSX subfamily.

In Escherichia coli, this protein is Protein ORF5 in retron Ec67.